A 1129-amino-acid chain; its full sequence is Phytochrome A (1129 aa).

Positions 217–399 constitute a GAF domain; sequence SMERLCDTMV…VFAIHVSKEL (183 aa). Residue C322 participates in phytochromobilin binding. PAS domains are found at residues 622–692 and 755–826; these read VTSE…LQGK and DYKA…VNLG. The region spanning 906 to 1123 is the Histidine kinase domain; that stretch reads YLRRQAKNPL…TFIITVELAA (218 aa).

Belongs to the phytochrome family. Homodimer. Contains one covalently linked phytochromobilin chromophore.

In terms of biological role, regulatory photoreceptor which exists in two forms that are reversibly interconvertible by light: the Pr form that absorbs maximally in the red region of the spectrum and the Pfr form that absorbs maximally in the far-red region. Photoconversion of Pr to Pfr induces an array of morphogenic responses, whereas reconversion of Pfr to Pr cancels the induction of those responses. Pfr controls the expression of a number of nuclear genes including those encoding the small subunit of ribulose-bisphosphate carboxylase, chlorophyll A/B binding protein, protochlorophyllide reductase, rRNA, etc. It also controls the expression of its own gene(s) in a negative feedback fashion. The polypeptide is Phytochrome A (PHYA) (Petroselinum crispum (Parsley)).